The chain runs to 120 residues: NADH-quinone oxidoreductase subunit A (120 aa).

A run of 3 helical transmembrane segments spans residues 10-30 (ILVFLGISLFIAVLALTMGWF), 65-85 (VAILFIIFDLETAFLFPWAVV), and 89-109 (IGWFGFWAMMVFLAILVVGFI).

The protein belongs to the complex I subunit 3 family. As to quaternary structure, NDH-1 is composed of 14 different subunits. Subunits NuoA, H, J, K, L, M, N constitute the membrane sector of the complex.

It is found in the cell inner membrane. The catalysed reaction is a quinone + NADH + 5 H(+)(in) = a quinol + NAD(+) + 4 H(+)(out). In terms of biological role, NDH-1 shuttles electrons from NADH, via FMN and iron-sulfur (Fe-S) centers, to quinones in the respiratory chain. The immediate electron acceptor for the enzyme in this species is believed to be ubiquinone. Couples the redox reaction to proton translocation (for every two electrons transferred, four hydrogen ions are translocated across the cytoplasmic membrane), and thus conserves the redox energy in a proton gradient. The chain is NADH-quinone oxidoreductase subunit A from Coxiella burnetii (strain Dugway 5J108-111).